The primary structure comprises 163 residues: Succinate dehydrogenase assembly factor 2-B, mitochondrial (163 aa).

The N-terminal 23 residues, 1–23, are a transit peptide targeting the mitochondrion; that stretch reads MFRQLRLTMDISGWIFMPWRRSL.

This sequence belongs to the SDHAF2 family. As to quaternary structure, interacts with the flavoprotein subunit within the SDH catalytic dimer.

Its subcellular location is the mitochondrion matrix. Its function is as follows. Plays an essential role in the assembly of succinate dehydrogenase (SDH), an enzyme complex (also referred to as respiratory complex II) that is a component of both the tricarboxylic acid (TCA) cycle and the mitochondrial electron transport chain, and which couples the oxidation of succinate to fumarate with the reduction of ubiquinone (coenzyme Q) to ubiquinol. Required for flavinylation (covalent attachment of FAD) of the flavoprotein subunit of the SDH catalytic dimer. In Drosophila ananassae (Fruit fly), this protein is Succinate dehydrogenase assembly factor 2-B, mitochondrial.